The following is a 428-amino-acid chain: MSAIVDIVGREVLDSRGNPTVECDVLLESGVMGRAAVPSGASTGSREAIELRDGDKARYLGKGVLKAVEHINTEISEAVLGLDASEQAFLDKTLIDLDGTDNKSRLGANAMLAVSMAVARAAAEESGLPLYRYLGGMGGMQLPVPMMNVINGGAHANNSLDLQEFMIIPVGAPSFREAVRWGAEVFHALKKIIHDKGMSTAVGDEGGFAPSVENHEAAIQLILQAIEAAGYTAGEQIALGLDCAASEFYKDGQYVLEGEGGLRLTAQQWTDMLATWCDKYPIISIEDGMAEGDWDGWKTLTERLGQNVQLVGDDLFVTNTKILKEGIDKRIANSILIKINQIGTLTETFAAIEMAKRAGYTAVISHRSGETEDSTIADIAVGTNAGQIKTGSLSRSDRIAKYNQLLRIEEDLGDIAFYPGRAAFYNLR.

Gln163 is a binding site for (2R)-2-phosphoglycerate. Glu205 acts as the Proton donor in catalysis. The Mg(2+) site is built by Asp242, Glu286, and Asp313. Lys338, Arg367, Ser368, and Lys389 together coordinate (2R)-2-phosphoglycerate. The Proton acceptor role is filled by Lys338.

This sequence belongs to the enolase family. Mg(2+) serves as cofactor.

Its subcellular location is the cytoplasm. It localises to the secreted. The protein localises to the cell surface. The enzyme catalyses (2R)-2-phosphoglycerate = phosphoenolpyruvate + H2O. It functions in the pathway carbohydrate degradation; glycolysis; pyruvate from D-glyceraldehyde 3-phosphate: step 4/5. Its function is as follows. Catalyzes the reversible conversion of 2-phosphoglycerate (2-PG) into phosphoenolpyruvate (PEP). It is essential for the degradation of carbohydrates via glycolysis. This is Enolase from Acidovorax ebreus (strain TPSY) (Diaphorobacter sp. (strain TPSY)).